The sequence spans 338 residues: Clathrin light chain 1 (338 aa).

The tract at residues 1–111 (MATFDDGDFP…NEMREEGFQR (111 aa)) is disordered. Polar residues-rich tracts occupy residues 29-47 (SEAQ…SSFN) and 61-73 (SSPN…PFES). The span at 102–111 (NEMREEGFQR) shows a compositional bias: basic and acidic residues. The segment at 102–163 (NEMREEGFQR…TIETNKTDNR (62 aa)) is involved in binding clathrin heavy chain. Residues 122 to 142 (LEEKEKKEKEMRNQIITEAED) adopt a coiled-coil conformation. A disordered region spans residues 192–338 (IPREVPNIEK…VTEAEGTKAE (147 aa)). A compositionally biased stretch (basic and acidic residues) spans 197 to 212 (PNIEKKRGKKDPDKKP). Residues 241–253 (NPPPHMMPPPPPA) are compositionally biased toward pro residues. Positions 254 to 304 (KDAKDGKDAKDGKDAKTGKDGKDAKGGKDAKDLKDGKPADPKVTEEKRPSP) are enriched in basic and acidic residues.

Belongs to the clathrin light chain family. As to quaternary structure, clathrin coats are formed from molecules containing 3 heavy chains and 3 light chains.

It localises to the cytoplasmic vesicle membrane. Its subcellular location is the membrane. It is found in the coated pit. Functionally, clathrin is the major protein of the polyhedral coat of coated pits and vesicles. This Arabidopsis thaliana (Mouse-ear cress) protein is Clathrin light chain 1.